Reading from the N-terminus, the 205-residue chain is MTDIVWHQHSIDQAARGAQKSQNPVLLWFTGLSGAGKSTLAGALERALFDAGFHTYLLDGDNVRHGLCKDLGFSLSDRDENLRRVGEVAKLMVDAGLVVLSAFISPTRAERDRVRALFPEGRFIEVHVSTPLSVCEARDPKGLYVKARSGEIKEFTGISSPYEAPTAAELTIDTSRGDLATQVQAMLAYLTAIEVIDANKLSALA.

31–38 (GLSGAGKS) serves as a coordination point for ATP. The Phosphoserine intermediate role is filled by Ser-105.

It belongs to the APS kinase family.

It catalyses the reaction adenosine 5'-phosphosulfate + ATP = 3'-phosphoadenylyl sulfate + ADP + H(+). It functions in the pathway sulfur metabolism; hydrogen sulfide biosynthesis; sulfite from sulfate: step 2/3. Its function is as follows. Catalyzes the synthesis of activated sulfate. The sequence is that of Adenylyl-sulfate kinase from Shewanella denitrificans (strain OS217 / ATCC BAA-1090 / DSM 15013).